We begin with the raw amino-acid sequence, 260 residues long: Chloride intracellular channel Clic (260 aa).

The chain crosses the membrane as a helical span at residues 42–66 (FCQEYFMDLYLLAELKTISLKVTTV).

This sequence belongs to the chloride channel CLIC family. Expressed in cardiac tubes.

The protein resides in the mitochondrion. It is found in the membrane. Its function is as follows. Might insert into membranes and form chloride ion channels. Channel activity depends on the pH. May play a role in ethanol sensitivity. This chain is Chloride intracellular channel Clic, found in Drosophila melanogaster (Fruit fly).